A 904-amino-acid polypeptide reads, in one-letter code: Toll-like receptor 3 (904 aa).

The N-terminal stretch at 1 to 26 (MSRPLPYHIHFFSGLLTCWILCTSSA) is a signal peptide. Positions 27–52 (HKCTVRHEVADCSHLKLTQIPDDLPT) constitute an LRRNT domain. The Lumenal segment spans residues 27–705 (HKCTVRHEVA…PCKDSAPFEL (679 aa)). Residues cysteine 29 and cysteine 38 are joined by a disulfide bond. Residues asparagine 53, asparagine 58, and asparagine 71 are each glycosylated (N-linked (GlcNAc...) asparagine). LRR repeat units lie at residues 53 to 74 (NITV…NFTR), 77 to 98 (QLTT…LCQS), 101 to 122 (WLEI…TFIF), 125 to 146 (NLTE…PFKN), 149 to 170 (NLIK…TQLQ), and 173 to 194 (NLQE…EFDF). Cysteines 96 and 123 form a disulfide. An N-linked (GlcNAc...) asparagine glycan is attached at asparagine 125. Asparagine 197 is a glycosylation site (N-linked (GlcNAc...) asparagine). 2 LRR repeats span residues 199 to 220 (SLKR…CFHT) and 223 to 245 (ELSG…LCLE). Asparagine 248, asparagine 253, asparagine 276, and asparagine 292 each carry an N-linked (GlcNAc...) asparagine glycan. 14 LRR repeats span residues 250–271 (SIEN…TFDG), 276–297 (NLTT…SFAW), 300–321 (HLEY…SFYG), 324–345 (NLRR…TSLP), 357–378 (CLEY…TFTG), 381–401 (RLKF…TNET), 409–430 (PLLL…AFSW), 433–455 (HLEV…EWRG), 466–487 (YNKY…QRLM), 508–529 (NLVI…LLKG), 532–553 (KLEI…ANPG), 564–585 (HLHI…AFKD), 588–609 (ELKS…VFDN), and 612–633 (SLKS…VFGP). Asparagine 399 carries an N-linked (GlcNAc...) asparagine glycan. N-linked (GlcNAc...) asparagine glycans are attached at residues asparagine 637, asparagine 663, and asparagine 668. The LRRCT domain maps to 646-699 (NPFDCTCESIAWFVNWINITHTNISELSNHYLCNTPPQYHGYPVMLFDVSPCKD). 2 disulfide bridges follow: cysteine 650/cysteine 678 and cysteine 652/cysteine 697. The chain crosses the membrane as a helical span at residues 706–726 (LFMININILLIFIFIVLLIHF). Residues 727-904 (EGWRISFYWN…VALGSRNSAH (178 aa)) lie on the Cytoplasmic side of the membrane. A TIR domain is found at 754–897 (FEYAAYIIHA…AFHHKLKVAL (144 aa)). A Phosphotyrosine modification is found at tyrosine 759. Residues lysine 765, lysine 812, and lysine 831 each participate in a glycyl lysine isopeptide (Lys-Gly) (interchain with G-Cter in ubiquitin) cross-link. Tyrosine 858 carries the post-translational modification Phosphotyrosine.

This sequence belongs to the Toll-like receptor family. Monomer and homodimer; dimerization is triggered by ligand-binding, the signaling unit is composed of one ds-RNA of around 40 bp and two TLR3 molecules, and lateral clustering of signaling units along the length of the ds-RNA ligand is required for TLR3 signal transduction. Interacts (via transmembrane domain) with UNC93B1; the interaction is required for transport from the ER to the endosomes. Interacts with TICAM1 (via the TIR domain) in response to poly(I:C) and this interaction is enhanced in the presence of WDFY1. Interacts with SRC; upon binding of double-stranded RNA. The tyrosine-phosphorylated form (via TIR domain) interacts with WDFY1 (via WD repeat 2) in response to poly(I:C). TLR3 signaling requires a proteolytic cleavage mediated by cathepsins CTSB and CTSH, the cleavage occurs between amino acids 252 and 346. The cleaved form of TLR3 is the predominant form found in endosomes. Post-translationally, ubiquitinated by TRIM3; leading to recognition and sorting of polyubiquitinated TLR3 by the ESCRT complexes. Ubiquitinated by ZNRF1 via 'Lys-63'-linked ubiquitin chains; leading to TLR3 lysosomal trafficking and degradation. Ubiquitinated by RNF170 at Lys-765 via 'Lys-48'-linked ubiquitin chains; leading to TLR3 proteasomal degradation.

The protein resides in the endoplasmic reticulum membrane. Its subcellular location is the endosome membrane. It is found in the early endosome. Its function is as follows. Key component of innate and adaptive immunity. TLRs (Toll-like receptors) control host immune response against pathogens through recognition of molecular patterns specific to microorganisms. TLR3 is a nucleotide-sensing TLR which is activated by double-stranded RNA, a sign of viral infection. Acts via the adapter TRIF/TICAM1, leading to NF-kappa-B activation, IRF3 nuclear translocation, cytokine secretion and the inflammatory response. This is Toll-like receptor 3 (TLR3) from Bos taurus (Bovine).